An 814-amino-acid polypeptide reads, in one-letter code: Acyl-coenzyme A dehydrogenase (814 aa).

Glu-497 serves as the catalytic Proton acceptor.

The protein belongs to the acyl-CoA dehydrogenase family. It depends on FAD as a cofactor.

The enzyme catalyses a medium-chain 2,3-saturated fatty acyl-CoA + oxidized [electron-transfer flavoprotein] + H(+) = a medium-chain (2E)-enoyl-CoA + reduced [electron-transfer flavoprotein]. It carries out the reaction a long-chain 2,3-saturated fatty acyl-CoA + oxidized [electron-transfer flavoprotein] + H(+) = a long-chain (2E)-enoyl-CoA + reduced [electron-transfer flavoprotein]. The protein operates within lipid metabolism; fatty acid beta-oxidation. In terms of biological role, catalyzes the dehydrogenation of acyl-coenzymes A (acyl-CoAs) to 2-enoyl-CoAs, the first step of the beta-oxidation cycle of fatty acid degradation. Is required for S.typhimurium to utilize medium- and long-chain fatty acids as sole carbon sources for growth. Is needed for bacterial survival during carbone-source starvation. This Salmonella typhimurium (strain LT2 / SGSC1412 / ATCC 700720) protein is Acyl-coenzyme A dehydrogenase (fadE).